Consider the following 252-residue polypeptide: Probable transcriptional regulatory protein RF_0799 (252 aa).

The disordered stretch occupies residues 1 to 21 (MAGHSKFKNIQHRKGAQDKKR).

Belongs to the TACO1 family.

It is found in the cytoplasm. This is Probable transcriptional regulatory protein RF_0799 from Rickettsia felis (strain ATCC VR-1525 / URRWXCal2) (Rickettsia azadi).